Here is a 643-residue protein sequence, read N- to C-terminus: Transmembrane 9 superfamily member 4 (643 aa).

An N-terminal signal peptide occupies residues 1 to 23; it reads MAAAMIWWPRFLLLLCLTCKGST. Topologically, residues 24-282 are extracellular; the sequence is FYVPGVAPIN…TMSDVQIHWF (259 aa). Residues 283-303 traverse the membrane as a helical segment; the sequence is SIINSVVVVFFLSGILSMIII. The Cytoplasmic portion of the chain corresponds to 304 to 347; it reads RTLRKDIANYNKEDDIEDTMEESGWKLVHGDVFRPPQYPMILSS. Y313 bears the Phosphotyrosine mark. The chain crosses the membrane as a helical span at residues 348–368; it reads LLGSGIQLFCMILIVIFVAML. The Extracellular portion of the chain corresponds to 369–377; sequence GMLSPSSRG. A helical transmembrane segment spans residues 378–398; sequence ALMTTACFLFMFMGVFGGFSA. Topologically, residues 399–417 are cytoplasmic; it reads GRLYRTLKGHRWKKGAFCT. A helical transmembrane segment spans residues 418-438; the sequence is ATLYPGVVFGICFVLNCFIWG. At 439–450 the chain is on the extracellular side; sequence KHSSGAVPFPTM. Residues 451-471 form a helical membrane-spanning segment; the sequence is VALLCMWFGISLPLVYLGYYF. Over 472-502 the chain is Cytoplasmic; it reads GFRKQPYDNPVRTNQIPRQIPEQRWYMNRFV. The helical transmembrane segment at 503–523 threads the bilayer; it reads GILMAGILPFGAMFIELFFIF. Topologically, residues 524-536 are extracellular; the sequence is SAIWENQFYYLFG. Residues 537 to 557 form a helical membrane-spanning segment; the sequence is FLFLVFIILVVSCSQISIVMV. Residues 558–571 lie on the Cytoplasmic side of the membrane; the sequence is YFQLCAEDYRWWWR. The helical transmembrane segment at 572-592 threads the bilayer; the sequence is NFLVSGGSAFYVLVYAIFYFV. Over 593-599 the chain is Extracellular; the sequence is NKLDIVE. The helical transmembrane segment at 600 to 620 threads the bilayer; the sequence is FIPSLLYFGYTTLMVLSFWLL. Residues 621–643 lie on the Cytoplasmic side of the membrane; it reads TGTIGFYAAYMFVRKIYAAVKID.

The protein belongs to the nonaspanin (TM9SF) (TC 9.A.2) family.

Its subcellular location is the membrane. The protein localises to the golgi apparatus. It localises to the early endosome. Associates with proteins harboring glycine-rich transmembrane domains and ensures their efficient localization to the cell surface. The polypeptide is Transmembrane 9 superfamily member 4 (Tm9sf4) (Rattus norvegicus (Rat)).